We begin with the raw amino-acid sequence, 256 residues long: MLRIADKTFDSHLFTGTGKFASSQLMVEAIRASGSQLVTLAMKRVDLRQHNDAILEPLIAAGVTLLPNTSGAKTAEEAIFAAHLAREALGTNWLKLEIHPDARWLLPDPIETLKAAETLVQQGFVVLPYCGADPVLCKRLEEVGCAAVMPLGAPIGSNQGLETRAMLEIIIQQATVPVVVDAGIGVPSHAAQALEMGADAVLVNTAIAVADDPVNMAKAFRLAVEAGLLARQSGPGSRSYFAHATSPLTGFLEASA.

The Schiff-base intermediate with DXP role is filled by Lys-95. 1-deoxy-D-xylulose 5-phosphate contacts are provided by residues Gly-156, 182 to 183 (AG), and 204 to 205 (NT).

The protein belongs to the ThiG family. In terms of assembly, homotetramer. Forms heterodimers with either ThiH or ThiS.

It is found in the cytoplasm. The enzyme catalyses [ThiS sulfur-carrier protein]-C-terminal-Gly-aminoethanethioate + 2-iminoacetate + 1-deoxy-D-xylulose 5-phosphate = [ThiS sulfur-carrier protein]-C-terminal Gly-Gly + 2-[(2R,5Z)-2-carboxy-4-methylthiazol-5(2H)-ylidene]ethyl phosphate + 2 H2O + H(+). It participates in cofactor biosynthesis; thiamine diphosphate biosynthesis. Catalyzes the rearrangement of 1-deoxy-D-xylulose 5-phosphate (DXP) to produce the thiazole phosphate moiety of thiamine. Sulfur is provided by the thiocarboxylate moiety of the carrier protein ThiS. In vitro, sulfur can be provided by H(2)S. This Escherichia coli (strain K12 / MC4100 / BW2952) protein is Thiazole synthase.